Here is a 232-residue protein sequence, read N- to C-terminus: GDT1-like protein 5 (232 aa).

6 consecutive transmembrane segments (helical) span residues 13–33 (LAMTVLSEIGDKTFFAAAILA), 40–60 (LVLAGCLTSLTVMTALSVSLG), 72–92 (THHVTTLLFFVFGILSLWEGF), 135–155 (PFVLQFFSPIFIKAFSITFFG), 175–195 (FGVVLGGVLAQALCTTAAVMG), and 207–227 (MVGLSSGVLFLLFGIMSYLSG).

The protein belongs to the GDT1 family.

It localises to the membrane. In Oryza sativa subsp. japonica (Rice), this protein is GDT1-like protein 5.